The chain runs to 338 residues: Ketol-acid reductoisomerase (NADP(+)) (338 aa).

The KARI N-terminal Rossmann domain maps to 3-183 (IDVFYDDDAD…GGARAGVIPT (181 aa)). Residues 26 to 29 (YGSQ), arginine 49, serine 52, serine 54, and 84 to 87 (DTSQ) each bind NADP(+). Histidine 109 is a catalytic residue. Glycine 135 is an NADP(+) binding site. Positions 184–329 (TFEAETVTDL…AKLRDLMSWV (146 aa)) constitute a KARI C-terminal knotted domain. Mg(2+) is bound by residues aspartate 192, glutamate 196, glutamate 228, and glutamate 232. Serine 253 is a binding site for substrate.

This sequence belongs to the ketol-acid reductoisomerase family. The cofactor is Mg(2+).

It carries out the reaction (2R)-2,3-dihydroxy-3-methylbutanoate + NADP(+) = (2S)-2-acetolactate + NADPH + H(+). The catalysed reaction is (2R,3R)-2,3-dihydroxy-3-methylpentanoate + NADP(+) = (S)-2-ethyl-2-hydroxy-3-oxobutanoate + NADPH + H(+). It functions in the pathway amino-acid biosynthesis; L-isoleucine biosynthesis; L-isoleucine from 2-oxobutanoate: step 2/4. It participates in amino-acid biosynthesis; L-valine biosynthesis; L-valine from pyruvate: step 2/4. Functionally, involved in the biosynthesis of branched-chain amino acids (BCAA). Catalyzes an alkyl-migration followed by a ketol-acid reduction of (S)-2-acetolactate (S2AL) to yield (R)-2,3-dihydroxy-isovalerate. In the isomerase reaction, S2AL is rearranged via a Mg-dependent methyl migration to produce 3-hydroxy-3-methyl-2-ketobutyrate (HMKB). In the reductase reaction, this 2-ketoacid undergoes a metal-dependent reduction by NADPH to yield (R)-2,3-dihydroxy-isovalerate. The sequence is that of Ketol-acid reductoisomerase (NADP(+)) from Corynebacterium jeikeium (strain K411).